The chain runs to 537 residues: Syncytin-2 (537 aa).

Positions 1–15 are cleaved as a signal peptide; the sequence is MGLLLLVLILTPLLA. At 16 to 478 the chain is on the extracellular side; it reads AYRHPDFPLL…GWLNWEGTWK (463 aa). Residues 43–46 carry the CXXC motif; that stretch reads CWLC. Intrachain disulfides connect Cys-43/Cys-46, Cys-43/Cys-439, and Cys-431/Cys-438. Residues Asn-133, Asn-146, Asn-177, Asn-220, Asn-241, Asn-247, Asn-312, and Asn-332 are each glycosylated (N-linked (GlcNAc...) asparagine). Residues 354–374 form a fusion peptide region; that stretch reads FIPLLAGLGILAGTGTGIAGI. The CKS-17 signature appears at 414-430; it reads LQNRRGLDMLTAAQGGI. The short motif at 431–439 is the CX6CC element; the sequence is CLALDEKCC. Residue Asn-443 is glycosylated (N-linked (GlcNAc...) asparagine). Residues 479-499 traverse the membrane as a helical segment; it reads WFSWVLPFIGPLVSLLLLLLF. Residues 500 to 537 lie on the Cytoplasmic side of the membrane; that stretch reads GPCLLNLITQFVSSRLQAIKLQTNGAGCRPRNIQESPF.

Belongs to the gamma type-C retroviral envelope protein family. HERV class-I FRD env subfamily. As to quaternary structure, the surface and transmembrane proteins form a heterodimer. They are attached by non-covalent interactions or by a labile interchain disulfide bond. In terms of processing, specific enzymatic cleavages in vivo yield the mature SU and TM proteins. Post-translationally, the CXXC motif is highly conserved across a broad range of retroviral envelope proteins. It is thought to participate in the formation of a labile disulfide bond possibly with the CX6CC motif present in the transmembrane protein.

The protein resides in the virion. Its subcellular location is the cell membrane. Its function is as follows. This endogenous retroviral envelope protein has retained its original fusogenic properties and participates in trophoblast fusion and the formation of a syncytium during placenta morphogenesis. The interaction with MFSD2A is apparently important for this process. Endogenous envelope proteins may have kept, lost or modified their original function during evolution but this one can still make pseudotypes with MLV, HIV-1 or SIV-1 virions and confer infectivity. Retroviral envelope proteins mediate receptor recognition and membrane fusion during early infection. The surface protein mediates receptor recognition, while the transmembrane protein anchors the envelope heterodimer to the viral membrane through one transmembrane domain. The other hydrophobic domain, called fusion peptide, mediates fusion of the viral membrane with the target cell membrane. This chain is Syncytin-2 (ERVFRD-1), found in Macaca fascicularis (Crab-eating macaque).